A 101-amino-acid chain; its full sequence is MAKNSKIVKNERRLVLVARHAERRAELKAIISSPSTPADARAAAQSELNRQPRDASPVRVRNRDAVDGRPRGHLRKFGLSRMRVRELAHRGQLPGVRKSSW.

The interval 29–73 (AIISSPSTPADARAAAQSELNRQPRDASPVRVRNRDAVDGRPRGH) is disordered. The span at 61-70 (RNRDAVDGRP) shows a compositional bias: basic and acidic residues.

It belongs to the universal ribosomal protein uS14 family. Part of the 30S ribosomal subunit. Contacts proteins S3 and S10.

Binds 16S rRNA, required for the assembly of 30S particles and may also be responsible for determining the conformation of the 16S rRNA at the A site. This chain is Small ribosomal subunit protein uS14A, found in Mycolicibacterium gilvum (strain PYR-GCK) (Mycobacterium gilvum (strain PYR-GCK)).